The chain runs to 280 residues: Probable cell division protein WhiA (280 aa).

A DNA-binding region (H-T-H motif) is located at residues 247 to 279 (SLEQIANFFFTKYNIKISRSGIQHFSVNLKKLC).

It belongs to the WhiA family.

In terms of biological role, involved in cell division and chromosome segregation. The chain is Probable cell division protein WhiA from Mycoplasma genitalium (strain ATCC 33530 / DSM 19775 / NCTC 10195 / G37) (Mycoplasmoides genitalium).